Reading from the N-terminus, the 739-residue chain is Malate synthase G (739 aa).

Residues M1–D18 show a composition bias toward polar residues. Positions M1–V23 are disordered. Acetyl-CoA-binding positions include V135, R142–F143, S292, and R329. The active-site Proton acceptor is R356. Residues R356, E447, and G472–D475 each bind glyoxylate. Residues E447 and D475 each contribute to the Mg(2+) site. P556 is an acetyl-CoA binding site. C633 is modified (cysteine sulfenic acid (-SOH)). D647 serves as the catalytic Proton donor.

It belongs to the malate synthase family. GlcB subfamily. As to quaternary structure, monomer. Mg(2+) is required as a cofactor.

The protein localises to the cytoplasm. It carries out the reaction glyoxylate + acetyl-CoA + H2O = (S)-malate + CoA + H(+). It participates in carbohydrate metabolism; glyoxylate cycle; (S)-malate from isocitrate: step 2/2. Its activity is regulated as follows. Inhibited by oxalate, glycolate and ATP. In terms of biological role, involved in the glycolate utilization. Catalyzes the condensation and subsequent hydrolysis of acetyl-coenzyme A (acetyl-CoA) and glyoxylate to form malate and CoA. The protein is Malate synthase G of Corynebacterium glutamicum (strain ATCC 13032 / DSM 20300 / JCM 1318 / BCRC 11384 / CCUG 27702 / LMG 3730 / NBRC 12168 / NCIMB 10025 / NRRL B-2784 / 534).